A 447-amino-acid polypeptide reads, in one-letter code: tRNA-2-methylthio-N(6)-dimethylallyladenosine synthase (447 aa).

The MTTase N-terminal domain occupies 3–120; the sequence is KKLYIKTNGC…LPALLNERLE (118 aa). 6 residues coordinate [4Fe-4S] cluster: cysteine 12, cysteine 49, cysteine 83, cysteine 157, cysteine 161, and cysteine 164. Residues 143–375 enclose the Radical SAM core domain; it reads RAEGPTAFVS…QNRLLMNAAR (233 aa). The 64-residue stretch at 378-441 folds into the TRAM domain; that stretch reads ESMIGSKQKI…PNSLRGRLLE (64 aa).

It belongs to the methylthiotransferase family. MiaB subfamily. As to quaternary structure, monomer. [4Fe-4S] cluster serves as cofactor.

It localises to the cytoplasm. It carries out the reaction N(6)-dimethylallyladenosine(37) in tRNA + (sulfur carrier)-SH + AH2 + 2 S-adenosyl-L-methionine = 2-methylsulfanyl-N(6)-dimethylallyladenosine(37) in tRNA + (sulfur carrier)-H + 5'-deoxyadenosine + L-methionine + A + S-adenosyl-L-homocysteine + 2 H(+). Catalyzes the methylthiolation of N6-(dimethylallyl)adenosine (i(6)A), leading to the formation of 2-methylthio-N6-(dimethylallyl)adenosine (ms(2)i(6)A) at position 37 in tRNAs that read codons beginning with uridine. This is tRNA-2-methylthio-N(6)-dimethylallyladenosine synthase from Legionella pneumophila (strain Paris).